A 434-amino-acid chain; its full sequence is Xylose isomerase (434 aa).

Active-site residues include His99 and Asp102. Residues Glu230, Glu266, His269, Asp294, Asp305, Asp307, and Asp337 each coordinate Mg(2+).

Belongs to the xylose isomerase family. Homotetramer. Requires Mg(2+) as cofactor.

It localises to the cytoplasm. The catalysed reaction is alpha-D-xylose = alpha-D-xylulofuranose. The sequence is that of Xylose isomerase from Dinoroseobacter shibae (strain DSM 16493 / NCIMB 14021 / DFL 12).